The following is a 355-amino-acid chain: Spore germination protein XB (355 aa).

The next 10 helical transmembrane spans lie at 2–24, 34–56, 69–91, 106–128, 135–157, 180–197, 210–232, 265–287, 299–321, and 326–348; these read VNFF…VIII, DSWI…VFIV, LMRN…YLII, FYLP…FYNI, IALT…MIAN, GMIY…ILFL, LIIV…IVEF, VYQW…PDVL, ISIL…SFYW, and VFLP…FVWV.

The protein belongs to the amino acid-polyamine-organocation (APC) superfamily. Spore germination protein (SGP) (TC 2.A.3.9) family.

It is found in the cell membrane. Functionally, may allow B.anthracis to germinate within phagocytic cells and therefore involved in virulence. The sequence is that of Spore germination protein XB (gerXB) from Bacillus anthracis.